The primary structure comprises 294 residues: Eukaryotic translation initiation factor 3 subunit G (294 aa).

Positions 1-22 (MQTFHHQDTGSEDFRQNTMDEK) are enriched in basic and acidic residues. Disordered regions lie at residues 1–42 (MQTF…DGTK) and 164–211 (GGMG…SDDD). The segment covering 30 to 42 (STPQITQNADGTK) has biased composition (polar residues). Positions 193–205 (GPGGPGGPGGAAG) are enriched in gly residues. The RRM domain occupies 214–292 (LTLRVTNLSE…LIMKVDYSKK (79 aa)).

It belongs to the eIF-3 subunit G family. Component of the eukaryotic translation initiation factor 3 (eIF-3) complex.

It localises to the cytoplasm. In terms of biological role, RNA-binding component of the eukaryotic translation initiation factor 3 (eIF-3) complex, which is involved in protein synthesis of a specialized repertoire of mRNAs and, together with other initiation factors, stimulates binding of mRNA and methionyl-tRNAi to the 40S ribosome. The eIF-3 complex specifically targets and initiates translation of a subset of mRNAs involved in cell proliferation. This subunit can bind 18S rRNA. This is Eukaryotic translation initiation factor 3 subunit G from Yarrowia lipolytica (strain CLIB 122 / E 150) (Yeast).